A 491-amino-acid polypeptide reads, in one-letter code: Cell division control protein 1 (491 aa).

Positions methionine 1 to lysine 33 are disordered. Residues methionine 1–arginine 39 are Cytoplasmic-facing. Positions tyrosine 24–lysine 33 are enriched in basic residues. The helical transmembrane segment at leucine 40 to tyrosine 60 threads the bilayer. The Extracellular segment spans residues tyrosine 61–alanine 391. Residues aspartate 95, aspartate 144, asparagine 183, and histidine 323 each coordinate a divalent metal cation. A helical membrane pass occupies residues isoleucine 392–phenylalanine 412. Residues proline 413–serine 465 are Cytoplasmic-facing. A helical membrane pass occupies residues isoleucine 466–tyrosine 486. Over phenylalanine 487–valine 491 the chain is Extracellular.

It belongs to the metallophosphoesterase superfamily. MPPE1 family. The cofactor is a divalent metal cation.

The protein localises to the membrane. Functionally, probable metallophosphoesterase which may participate in recombinational repair of double -strand breaks. The polypeptide is Cell division control protein 1 (CDC1) (Saccharomyces cerevisiae (strain ATCC 204508 / S288c) (Baker's yeast)).